The following is a 325-amino-acid chain: D-alanine--D-alanine ligase (325 aa).

Residues 107 to 311 enclose the ATP-grasp domain; the sequence is KRLLLSESLP…YEALCVEVLK (205 aa). Residue 137–192 coordinates ATP; sequence VDTLGLPLIVKPAREGSSLGLSKVTERAAMAAAVALAEKMDADILCEQFISGDEVT. Aspartate 264, glutamate 278, and asparagine 280 together coordinate Mg(2+).

Belongs to the D-alanine--D-alanine ligase family. Mg(2+) is required as a cofactor. Requires Mn(2+) as cofactor.

The protein localises to the cytoplasm. It catalyses the reaction 2 D-alanine + ATP = D-alanyl-D-alanine + ADP + phosphate + H(+). Its pathway is cell wall biogenesis; peptidoglycan biosynthesis. Functionally, cell wall formation. The protein is D-alanine--D-alanine ligase of Polaromonas naphthalenivorans (strain CJ2).